Reading from the N-terminus, the 167-residue chain is Caltractin (167 aa).

The span at 1 to 18 shows a compositional bias: basic residues; that stretch reads MSSARTVRKDKPRGRHHG. A disordered region spans residues 1-23; it reads MSSARTVRKDKPRGRHHGLTQQK. EF-hand domains are found at residues 22–57, 58–93, 95–130, and 131–166; these read QKRQ…LGFE, MTEE…KIGE, DTKE…LGEN, and FTVK…TSYA. Ca(2+) contacts are provided by Asp35, Asp37, Ser39, Thr41, Glu46, Asp71, Asp73, Ser75, Glu82, Asp108, Asp110, Asn112, Lys114, Asp119, Asp144, Asp146, Asp148, Glu150, and Glu155.

Belongs to the centrin family.

It localises to the cytoplasm. Its subcellular location is the cytoskeleton. The protein resides in the microtubule organizing center. Functionally, plays a fundamental role in microtubule-organizing center structure and function. In Atriplex nummularia (Old man saltbush), this protein is Caltractin.